A 180-amino-acid polypeptide reads, in one-letter code: Bifunctional protein PyrR (180 aa).

The PRPP-binding signature appears at 101-113 (VILVDDVLYTGRT).

Belongs to the purine/pyrimidine phosphoribosyltransferase family. PyrR subfamily. As to quaternary structure, homodimer and homohexamer; in equilibrium.

The catalysed reaction is UMP + diphosphate = 5-phospho-alpha-D-ribose 1-diphosphate + uracil. Regulates transcriptional attenuation of the pyrimidine nucleotide (pyr) operon by binding in a uridine-dependent manner to specific sites on pyr mRNA. This disrupts an antiterminator hairpin in the RNA and favors formation of a downstream transcription terminator, leading to a reduced expression of downstream genes. Functionally, also displays a weak uracil phosphoribosyltransferase activity which is not physiologically significant. This chain is Bifunctional protein PyrR, found in Bacillus mycoides (strain KBAB4) (Bacillus weihenstephanensis).